Reading from the N-terminus, the 157-residue chain is Crossover junction endodeoxyribonuclease RuvC (157 aa).

Catalysis depends on residues aspartate 7, glutamate 67, and aspartate 140. Residues aspartate 7, glutamate 67, and aspartate 140 each contribute to the Mg(2+) site.

Belongs to the RuvC family. Homodimer which binds Holliday junction (HJ) DNA. The HJ becomes 2-fold symmetrical on binding to RuvC with unstacked arms; it has a different conformation from HJ DNA in complex with RuvA. In the full resolvosome a probable DNA-RuvA(4)-RuvB(12)-RuvC(2) complex forms which resolves the HJ. It depends on Mg(2+) as a cofactor.

Its subcellular location is the cytoplasm. The enzyme catalyses Endonucleolytic cleavage at a junction such as a reciprocal single-stranded crossover between two homologous DNA duplexes (Holliday junction).. Its function is as follows. The RuvA-RuvB-RuvC complex processes Holliday junction (HJ) DNA during genetic recombination and DNA repair. Endonuclease that resolves HJ intermediates. Cleaves cruciform DNA by making single-stranded nicks across the HJ at symmetrical positions within the homologous arms, yielding a 5'-phosphate and a 3'-hydroxyl group; requires a central core of homology in the junction. The consensus cleavage sequence is 5'-(A/T)TT(C/G)-3'. Cleavage occurs on the 3'-side of the TT dinucleotide at the point of strand exchange. HJ branch migration catalyzed by RuvA-RuvB allows RuvC to scan DNA until it finds its consensus sequence, where it cleaves and resolves the cruciform DNA. This Rickettsia typhi (strain ATCC VR-144 / Wilmington) protein is Crossover junction endodeoxyribonuclease RuvC.